A 599-amino-acid polypeptide reads, in one-letter code: rRNA (cytosine-C(5))-methyltransferase NOP2C (599 aa).

The region spanning 158–265 is the PUA domain; sequence PKEVLVSRKC…IAVDLNHRVF (108 aa). Residues 304–310, Asp-328, and Asp-355 contribute to the S-adenosyl-L-methionine site; that span reads CAAPGGK. The disordered stretch occupies residues 372–454; it reads LINGDNSSSM…GGRAGKSQGF (83 aa). Low complexity predominate over residues 378 to 388; it reads SSSMTSHSELS. Over residues 399-412 the composition is skewed to basic and acidic residues; that stretch reads RRSEADKSCEKNDS. The span at 413–424 shows a compositional bias: polar residues; the sequence is TEQPNGGDNVSQ. Positions 428–438 are enriched in basic residues; it reads RKNKGRLKNGR. An S-adenosyl-L-methionine-binding site is contributed by Asp-465. Cys-516 serves as the catalytic Nucleophile.

The protein belongs to the class I-like SAM-binding methyltransferase superfamily. RsmB/NOP family.

Its subcellular location is the nucleus. It is found in the nucleolus. The catalysed reaction is a cytidine in rRNA + S-adenosyl-L-methionine = a 5-methylcytidine in rRNA + S-adenosyl-L-homocysteine + H(+). Its function is as follows. Involved in ribosomal large subunit assembly. S-adenosyl-L-methionine-dependent methyltransferase that may methylates the C(5) position of cytosine in rRNA. May play a role in the regulation of the cell cycle and the increased nucleolar activity that is associated with the cell proliferation. Seems involved in the regulation of cell proliferation. The sequence is that of rRNA (cytosine-C(5))-methyltransferase NOP2C from Arabidopsis thaliana (Mouse-ear cress).